The sequence spans 324 residues: Virulence-associated V antigen (324 aa).

The protein localises to the secreted. Possibly involved in calcium regulation of YOP expression, which includes the export process. This Yersinia pestis (strain Pestoides F) protein is Virulence-associated V antigen (lcrV).